The sequence spans 365 residues: Phospho-N-acetylmuramoyl-pentapeptide-transferase (365 aa).

10 helical membrane-spanning segments follow: residues 29–49 (VGGLFFSLFISIVIGNRIIVW), 73–93 (GTPTMGGIIILISVVTSVIIW), 97–117 (SNIYIWYILFIFVMYGILGLV), 133–153 (ILNKYLWQSIIAWILIVIMFI), 171–191 (IVCKLKIWDMILAYFVIVGTS), 202–222 (GLVIVPVILVVSGLAIVTWVV), 242–262 (LVVVCASIIGAGLGFLWFNSY), 266–286 (IFMGDVGSLSLGGVIGLVSIL), 291–311 (YLLLIMGGIFVIESLSVIFQV), and 341–361 (IVVRFWIVSSILVLLSIVIFI).

It belongs to the glycosyltransferase 4 family. MraY subfamily. Mg(2+) serves as cofactor.

The protein localises to the cell inner membrane. It carries out the reaction UDP-N-acetyl-alpha-D-muramoyl-L-alanyl-gamma-D-glutamyl-meso-2,6-diaminopimeloyl-D-alanyl-D-alanine + di-trans,octa-cis-undecaprenyl phosphate = di-trans,octa-cis-undecaprenyl diphospho-N-acetyl-alpha-D-muramoyl-L-alanyl-D-glutamyl-meso-2,6-diaminopimeloyl-D-alanyl-D-alanine + UMP. It participates in cell wall biogenesis; peptidoglycan biosynthesis. In terms of biological role, catalyzes the initial step of the lipid cycle reactions in the biosynthesis of the cell wall peptidoglycan: transfers peptidoglycan precursor phospho-MurNAc-pentapeptide from UDP-MurNAc-pentapeptide onto the lipid carrier undecaprenyl phosphate, yielding undecaprenyl-pyrophosphoryl-MurNAc-pentapeptide, known as lipid I. The sequence is that of Phospho-N-acetylmuramoyl-pentapeptide-transferase from Blochmanniella floridana.